A 471-amino-acid chain; its full sequence is MTDLPQNVRWQLWIVAFGFFMQALDTTIVNTALPSMAASLGESPLRMHMVIVSYVLTVAVMLPASGWLADRVGVRNIFFTAIVLFTLGSLFCAQSSTLNELVAARVLQGIGGAMMVPVGRLTVMKIVPRDQYMAAMTFVTLPGQVGPLLGPALGGLLVEYASWHWIFLINLPVGIAGAAATLWLMPNYTMQTRRFDFSGFLLLAFGMAALTIALDGYRSTGLSPAGLGALVAGGSAATLLYLWHARGNERALFSLRLFNTRTFSLGLFGSLCGRIGSGMLPFMTPVFLQIGLGFSPFHAGLMMMPMVLGSMGIKRIVVQVVNRFGYRRVLVASTLALALVTLLFMGVALAGWYWLLPVVMLFQGMVNSVRFSTMNTLTLRDLPDEMASSGNSLLSMVMQLSMSLGVSIAGLLLGAFGHNQLAADSGDAHGIFFWTYLCMALIIALPALVFARVPDDISKNAVIARRKRSAS.

A run of 13 helical transmembrane segments spans residues 12–32 (LWIV…VNTA), 49–69 (MVIV…GWLA), 77–97 (IFFT…QSST), 106–126 (VLQG…VMKI), 138–158 (FVTL…GLLV), 165–185 (WIFL…LWLM), 197–217 (FSGF…LDGY), 225–245 (AGLG…LWHA), 263–285 (FSLG…FMTP), 290–312 (IGLG…GSMG), 342–362 (LLFM…VMLF), 396–416 (MVMQ…LGAF), and 431–451 (IFFW…LVFA).

The protein belongs to the major facilitator superfamily. TCR/Tet family.

The protein localises to the cell inner membrane. The protein is Putative multidrug resistance protein MdtD of Cronobacter sakazakii (strain ATCC BAA-894) (Enterobacter sakazakii).